Here is a 148-residue protein sequence, read N- to C-terminus: Probable transporter PD_1893 (148 aa).

A run of 4 helical transmembrane segments spans residues 11-31 (FTVA…SEMI), 48-68 (NPSL…GMAL), 93-113 (IVFG…CPGP), and 118-138 (LSTG…GMII).

The protein belongs to the TsuA/YedE (TC 9.B.102) family.

Its subcellular location is the cell inner membrane. In Xylella fastidiosa (strain Temecula1 / ATCC 700964), this protein is Probable transporter PD_1893.